The primary structure comprises 581 residues: Frizzled-8 (581 aa).

The first 23 residues, 1 to 23, serve as a signal peptide directing secretion; sequence MESLSLSLLLLVSWLQGSQCAAA. The FZ domain maps to 24 to 144; that stretch reads KELSCQEITV…GNPDTLCMDY (121 aa). Residues 24-239 lie on the Extracellular side of the membrane; that stretch reads KELSCQEITV…PEERTFTEFW (216 aa). 5 disulfides stabilise this stretch: C28–C89, C36–C82, C73–C111, C100–C141, and C104–C128. N42 carries an N-linked (GlcNAc...) asparagine glycan. 64–71 lines the hexadecanoate pocket; the sequence is QFWPLVVI. Residues 88-93 are wnt-binding; the sequence is ICLEDY. The segment at 140-146 is wnt-binding; that stretch reads LCMDYYN. A glycan (N-linked (GlcNAc...) asparagine) is linked at N146. The interval 151–189 is disordered; sequence TTAAPSHPEPPKPPARSVPKGRTRVEPPRSRSRATGCES. A compositionally biased stretch (pro residues) spans 157 to 166; sequence HPEPPKPPAR. Residues 240–260 traverse the membrane as a helical segment; it reads IGLWSVLCFASTFATVSTFLI. The Cytoplasmic portion of the chain corresponds to 261 to 271; it reads DMERFKYPERP. A helical membrane pass occupies residues 272 to 292; the sequence is IIFLSACYLLVSTGYLIRLIA. Over 293-320 the chain is Extracellular; sequence GHEKVACSRGELDLEHIIHYETTGPALC. Residues 321 to 341 form a helical membrane-spanning segment; the sequence is TLVFLLIYFFGMASSIWWVIL. Topologically, residues 342–377 are cytoplasmic; the sequence is SLTWFLAAGMKWGNEAIAGYSQYFHLAAWLVPSIKS. The helical transmembrane segment at 378–398 threads the bilayer; that stretch reads IAVLALSSVDGDPVAGICFVG. Residues 399 to 407 are Extracellular-facing; that stretch reads NQNLDNLRG. The helical transmembrane segment at 408-428 threads the bilayer; the sequence is FVLAPLVIYLFIGSMFLLAGF. The Cytoplasmic portion of the chain corresponds to 429-454; it reads VSLFRIRSVIKQGGTKTDKLEKLMIR. Residues 455–475 form a helical membrane-spanning segment; it reads IGIFSVLYTVPATIVVACFFY. The Extracellular portion of the chain corresponds to 476-505; it reads EQHNRQGWEVAHNCNSCQPEMAQPHRPDYA. Residues 506-526 traverse the membrane as a helical segment; it reads VFMLKYFMCLVVGITSGVWIW. Topologically, residues 527–581 are cytoplasmic; it reads SGKTLESWRAFCTRCCWGSKATGGSMYSDVSTGLTWRSGTGSSVSCPKQMPLSQV. The Lys-Thr-X-X-X-Trp motif, mediates interaction with the PDZ domain of Dvl family members motif lies at 529 to 534; the sequence is KTLESW. Residues 579 to 581 carry the PDZ-binding motif; that stretch reads SQV.

This sequence belongs to the G-protein coupled receptor Fz/Smo family. In terms of assembly, interacts with lypd6 and the interaction is strongly enhanced by wnt3a.

It localises to the membrane. The protein localises to the cell membrane. In terms of biological role, receptor for Wnt proteins. Most of frizzled receptors are coupled to the beta-catenin canonical signaling pathway, which leads to the activation of disheveled proteins, inhibition of GSK-3 kinase, nuclear accumulation of beta-catenin and activation of Wnt target genes. A second signaling pathway involving PKC and calcium fluxes has been seen for some family members, but it is not yet clear if it represents a distinct pathway or if it can be integrated in the canonical pathway, as PKC seems to be required for Wnt-mediated inactivation of GSK-3 kinase. Both pathways seem to involve interactions with G-proteins. May be involved in transduction and intercellular transmission of polarity information during tissue morphogenesis and/or in differentiated tissues. Activation by Wnt8, Wnt5A or Wnt3A induces expression of beta-catenin target genes. Displays an axis-inducing activity. In Xenopus laevis (African clawed frog), this protein is Frizzled-8 (fzd8).